A 548-amino-acid polypeptide reads, in one-letter code: 5-epi-aristolochene synthase 1 (548 aa).

Mg(2+) contacts are provided by Asp301, Asp305, Asp444, Thr448, and Glu452. A DDXXD motif motif is present at residues 301 to 305 (DDTFD).

The protein belongs to the terpene synthase family. In terms of assembly, monomer. Mg(2+) is required as a cofactor. As to expression, expressed in roots, but not in shoots.

It is found in the cytoplasm. It catalyses the reaction (2E,6E)-farnesyl diphosphate = (+)-5-epi-aristolochene + diphosphate. The protein operates within secondary metabolite biosynthesis; terpenoid biosynthesis. Functionally, catalyzes the cyclization of trans,trans-farnesyl diphosphate (FPP) to the bicyclic intermediate 5-epi-aristolochene, initial step in the conversion of FPP to the sesquiterpenoid antifungal phytoalexin capsidiol. Produces germacrene A as an enzyme-bound intermediate that is not released by the enzyme, but is further cyclized to produce the bicyclic 5-epi-aristolochene. The sequence is that of 5-epi-aristolochene synthase 1 (EAS) from Nicotiana attenuata (Coyote tobacco).